A 423-amino-acid polypeptide reads, in one-letter code: MSSQVVGIEPLYIKAEPASPDSPKGSSETETEPPVALAPGPAPTRCLPGHKEEEDGEGAGPGEQGGGKLVLSSLPKRLCLVCGDVASGYHYGVASCEACKAFFKRTIQGSIEYSCPASNECEITKRRRKACQACRFTKCLRVGMLKEGVRLDRVRGGRQKYKRRPEVDPLPFPGPFPAGPLAVAGGPRKTAAPVNALVSHLLVVEPEKLYAMPDPAGPDGHLPAVATLCDLFDREIVVTISWAKSIPGFSSLSLSDQMSVLQSVWMEVLVLGVAQRSLPLQDELAFAEDLVLDEEGARAAGLGELGAALLQLVRRLQALRLEREEYVLLKALALANSDSVHIEDAEAVEQLREALHEALLEYEAGRAGPGGGAERRRAGRLLLTLPLLRQTAGKVLAHFYGVKLEGKVPMHKLFLEMLEAMMD.

Residues 1-67 (MSSQVVGIEP…GAGPGEQGGG (67 aa)) form a disordered region. Residues 1-76 (MSSQVVGIEP…GKLVLSSLPK (76 aa)) form a repressor domain region. Lys-14 is covalently cross-linked (Glycyl lysine isopeptide (Lys-Gly) (interchain with G-Cter in SUMO)). Ser-19 and Ser-22 each carry phosphoserine. Residues 58–67 (GAGPGEQGGG) show a composition bias toward gly residues. The nuclear receptor DNA-binding region spans 76-151 (KRLCLVCGDV…VGMLKEGVRL (76 aa)). 2 NR C4-type zinc fingers span residues 79–99 (CLVC…CEAC) and 115–134 (CPAS…CQAC). N6-acetyllysine; by PCAF/KAT2B occurs at positions 129, 138, 160, and 162. Lys-189 participates in a covalent cross-link: Glycyl lysine isopeptide (Lys-Gly) (interchain with G-Cter in SUMO2). Residues 193–421 (PVNALVSHLL…KLFLEMLEAM (229 aa)) form the NR LBD domain. Lys-403 participates in a covalent cross-link: Glycyl lysine isopeptide (Lys-Gly) (interchain with G-Cter in SUMO); alternate. Residue Lys-403 forms a Glycyl lysine isopeptide (Lys-Gly) (interchain with G-Cter in SUMO2); alternate linkage. Positions 403–423 (KLEGKVPMHKLFLEMLEAMMD) are AF-2 domain.

The protein belongs to the nuclear hormone receptor family. NR3 subfamily. As to quaternary structure, binds DNA as a monomer or a homodimer. Interacts (via the AF2 domain) with coactivator PPARGC1A (via the L3 motif); the interaction greatly enhances transcriptional activity of genes involved in energy metabolism. Interacts with PIAS4; the interaction enhances sumoylation. Interacts with MAPK15; promotes re-localization of ESRRA to the cytoplasm through a XPO1-dependent mechanism then inhibits ESRRA transcriptional activity. Phosphorylation on Ser-19 enhances sumoylation on Lys-14 increasing repression of transcriptional activity. Post-translationally, sumoylated with SUMO2. Main site is Lys-14 which is enhanced by phosphorylation on Ser-19, cofactor activation, and by interaction with PIAS4. Sumoylation enhances repression of transcriptional activity, but has no effect on subcellular location nor on DNA binding. In terms of processing, reversibly acetylated. Acetylation by PCAF/KAT2 at Lys-129, Lys-138, Lys-160 and Lys-162 and PCAF/KAT2 decreases transcriptional activity probably by inhibiting DNA-binding activity; deacetylation involves SIRT1 and HDAC8 and increases DNA-binding.

The protein resides in the nucleus. It is found in the cytoplasm. Binds to an ERR-alpha response element (ERRE) containing a single consensus half-site, 5'-TNAAGGTCA-3'. Can bind to the medium-chain acyl coenzyme A dehydrogenase (MCAD) response element NRRE-1 and may act as an important regulator of MCAD promoter. Binds to the C1 region of the lactoferrin gene promoter. Requires dimerization and the coactivator, PGC-1A, for full activity. The ERRalpha/PGC1alpha complex is a regulator of energy metabolism. Induces the expression of PERM1 in the skeletal muscle. The polypeptide is Steroid hormone receptor ERR1 (ESRRA) (Homo sapiens (Human)).